A 238-amino-acid chain; its full sequence is Uridylate kinase (238 aa).

12 to 15 (KLSG) serves as a coordination point for ATP. UMP is bound at residue G54. ATP contacts are provided by G55 and R59. UMP-binding positions include D74 and 135 to 142 (TGNPYFST). Positions 168 and 171 each coordinate ATP.

This sequence belongs to the UMP kinase family. In terms of assembly, homohexamer.

The protein resides in the cytoplasm. It catalyses the reaction UMP + ATP = UDP + ADP. It participates in pyrimidine metabolism; CTP biosynthesis via de novo pathway; UDP from UMP (UMPK route): step 1/1. Inhibited by UTP. Catalyzes the reversible phosphorylation of UMP to UDP. The protein is Uridylate kinase of Syntrophomonas wolfei subsp. wolfei (strain DSM 2245B / Goettingen).